Reading from the N-terminus, the 244-residue chain is MSFIVYPALDIRDGRVVRLRQGDYAQETSYGDDALPRAQALAAQGAQWMHLVDLDAARAGGYTLAPLLASIRAQTPLQVQTGGGVRGRDDVARILDAGAGRVVVGSLAVRRPDEVVGWLEEFGAERITIALDARQDAQGQWQLPVHGWTENAGVTLDVLAQRYARAGMRHLLCTDIARDGMLAGPNISLYQHLSALLPGVAVQASGGIRDVADVAEARRAGCGGAILGKALLEQRMDLAEALAC.

Catalysis depends on Asp-10, which acts as the Proton acceptor. Asp-132 serves as the catalytic Proton donor.

This sequence belongs to the HisA/HisF family.

The protein resides in the cytoplasm. The enzyme catalyses 1-(5-phospho-beta-D-ribosyl)-5-[(5-phospho-beta-D-ribosylamino)methylideneamino]imidazole-4-carboxamide = 5-[(5-phospho-1-deoxy-D-ribulos-1-ylimino)methylamino]-1-(5-phospho-beta-D-ribosyl)imidazole-4-carboxamide. It functions in the pathway amino-acid biosynthesis; L-histidine biosynthesis; L-histidine from 5-phospho-alpha-D-ribose 1-diphosphate: step 4/9. This is 1-(5-phosphoribosyl)-5-[(5-phosphoribosylamino)methylideneamino] imidazole-4-carboxamide isomerase from Stenotrophomonas maltophilia (strain K279a).